A 355-amino-acid chain; its full sequence is Syntaxin-5 (355 aa).

Over 1–333 (MIPRKRYGSK…KYFQSVTSNR (333 aa)) the chain is Cytoplasmic. Positions 245-247 (IDM) match the IxM motif; signal for cargo packaging into COPII-coated vesicles motif. In terms of domain architecture, t-SNARE coiled-coil homology spans 263–325 (DSYIQSRADT…EAAHSEILKY (63 aa)). Residues 287–318 (FQQLAHMVKEQEETIQRIDENVLGAQLDVEAA) are a coiled coil. A helical; Anchor for type IV membrane protein membrane pass occupies residues 334–354 (WLMVKIFLILIVFFIIFVVFL). Position 355 (alanine 355) is a topological domain, vesicular.

It belongs to the syntaxin family. Part of a ternary complex containing STX5A, NSFL1C and VCP. Part of a unique SNARE complex composed of the Golgi SNAREs GOSR1, GOSR2, YKT6 and VTI1A. Component of a SNARE complex consisting of STX5, YKT6, GOSR1 and BET1L. Interacts with BET1L. Interacts with BET1. Interacts with COG4. Interacts with GM130/GOLGA2. Interacts (via IxM motif) with SEC24C and SEC24D; mediates STX5 packaging into COPII-coated vesicles. Interacts with VLDLR; this interaction mediates VLDLR translocation from the endoplasmic reticulum to the plasma membrane.

The protein resides in the endoplasmic reticulum-Golgi intermediate compartment membrane. It localises to the golgi apparatus membrane. Its function is as follows. Mediates endoplasmic reticulum to Golgi transport. Together with p115/USO1 and GM130/GOLGA2, involved in vesicle tethering and fusion at the cis-Golgi membrane to maintain the stacked and inter-connected structure of the Golgi apparatus. In terms of biological role, required for Golgi to endoplasmic reticulum retrogade transport, and for intra-Golgi transport. In Mus musculus (Mouse), this protein is Syntaxin-5 (Stx5).